A 143-amino-acid chain; its full sequence is Transcriptional regulator MraZ (143 aa).

SpoVT-AbrB domains follow at residues 5-47 and 76-119; these read EYEH…PRSV and AADM…APRR.

This sequence belongs to the MraZ family. Forms oligomers.

The protein resides in the cytoplasm. Its subcellular location is the nucleoid. This Roseiflexus sp. (strain RS-1) protein is Transcriptional regulator MraZ.